We begin with the raw amino-acid sequence, 400 residues long: Formate-dependent phosphoribosylglycinamide formyltransferase (400 aa).

N(1)-(5-phospho-beta-D-ribosyl)glycinamide is bound by residues 22–23 (EL) and glutamate 82. ATP contacts are provided by residues arginine 115, lysine 157, 162–167 (SSGKGQ), 197–200 (EGFV), and glutamate 205. One can recognise an ATP-grasp domain in the interval 120-315 (RLAAETLGLP…EFELHARAIL (196 aa)). 2 residues coordinate Mg(2+): glutamate 274 and glutamate 286. Residues aspartate 293, lysine 362, and 369–370 (RR) each bind N(1)-(5-phospho-beta-D-ribosyl)glycinamide.

Belongs to the PurK/PurT family. In terms of assembly, homodimer.

It carries out the reaction N(1)-(5-phospho-beta-D-ribosyl)glycinamide + formate + ATP = N(2)-formyl-N(1)-(5-phospho-beta-D-ribosyl)glycinamide + ADP + phosphate + H(+). Its pathway is purine metabolism; IMP biosynthesis via de novo pathway; N(2)-formyl-N(1)-(5-phospho-D-ribosyl)glycinamide from N(1)-(5-phospho-D-ribosyl)glycinamide (formate route): step 1/1. Functionally, involved in the de novo purine biosynthesis. Catalyzes the transfer of formate to 5-phospho-ribosyl-glycinamide (GAR), producing 5-phospho-ribosyl-N-formylglycinamide (FGAR). Formate is provided by PurU via hydrolysis of 10-formyl-tetrahydrofolate. This chain is Formate-dependent phosphoribosylglycinamide formyltransferase, found in Mycolicibacterium gilvum (strain PYR-GCK) (Mycobacterium gilvum (strain PYR-GCK)).